We begin with the raw amino-acid sequence, 407 residues long: Succinyl-diaminopimelate desuccinylase (407 aa).

A compositionally biased stretch (polar residues) spans 1 to 10; sequence MSDIDNNLTS. The disordered stretch occupies residues 1–20; sequence MSDIDNNLTSQTHQQATHQQ. The segment covering 11-20 has biased composition (low complexity); that stretch reads QTHQQATHQQ. His93 contacts Zn(2+). Asp95 is an active-site residue. Asp126 is a Zn(2+) binding site. Glu160 acts as the Proton acceptor in catalysis. The Zn(2+) site is built by Glu161, Glu189, and His379.

The protein belongs to the peptidase M20A family. DapE subfamily. As to quaternary structure, homodimer. Requires Zn(2+) as cofactor. Co(2+) serves as cofactor.

It carries out the reaction N-succinyl-(2S,6S)-2,6-diaminopimelate + H2O = (2S,6S)-2,6-diaminopimelate + succinate. It functions in the pathway amino-acid biosynthesis; L-lysine biosynthesis via DAP pathway; LL-2,6-diaminopimelate from (S)-tetrahydrodipicolinate (succinylase route): step 3/3. Its function is as follows. Catalyzes the hydrolysis of N-succinyl-L,L-diaminopimelic acid (SDAP), forming succinate and LL-2,6-diaminopimelate (DAP), an intermediate involved in the bacterial biosynthesis of lysine and meso-diaminopimelic acid, an essential component of bacterial cell walls. The polypeptide is Succinyl-diaminopimelate desuccinylase (Psychrobacter arcticus (strain DSM 17307 / VKM B-2377 / 273-4)).